Here is a 219-residue protein sequence, read N- to C-terminus: Thiopurine S-methyltransferase (219 aa).

Residues Trp-10, Leu-45, Glu-66, and Arg-123 each contribute to the S-adenosyl-L-methionine site.

It belongs to the class I-like SAM-binding methyltransferase superfamily. TPMT family.

Its subcellular location is the cytoplasm. The enzyme catalyses S-adenosyl-L-methionine + a thiopurine = S-adenosyl-L-homocysteine + a thiopurine S-methylether.. The chain is Thiopurine S-methyltransferase from Bordetella bronchiseptica (strain ATCC BAA-588 / NCTC 13252 / RB50) (Alcaligenes bronchisepticus).